The sequence spans 66 residues: Small ribosomal subunit protein bS21 (66 aa).

Belongs to the bacterial ribosomal protein bS21 family.

The protein is Small ribosomal subunit protein bS21 of Bdellovibrio bacteriovorus (strain ATCC 15356 / DSM 50701 / NCIMB 9529 / HD100).